We begin with the raw amino-acid sequence, 924 residues long: Nodulation receptor kinase (924 aa).

A signal peptide spans 1–29 (MMELRVICIIRLVVACVLCLCIFIRSASS). Residues 361–382 (EVIQKMRKELLLQNQDNEALES) adopt a coiled-coil conformation. 4 LRR repeats span residues 406–428 (VITK…VTEM), 430–452 (KLQI…PPSS), 453–475 (LLIS…IISL), and 477–498 (HLNS…AKLN). Residues 520 to 540 (FMIGAITSGSILITLAVVILF) traverse the membrane as a helical segment. A Protein kinase domain is found at 595–872 (EKYKTLIGEG…IVRELEDALI (278 aa)). ATP-binding positions include 601–609 (IGEGGFGSV) and Lys623. Asp721 serves as the catalytic Proton acceptor.

The protein belongs to the protein kinase superfamily. Ser/Thr protein kinase family. In terms of processing, may be phosphorylated.

It localises to the membrane. It carries out the reaction L-seryl-[protein] + ATP = O-phospho-L-seryl-[protein] + ADP + H(+). The catalysed reaction is L-threonyl-[protein] + ATP = O-phospho-L-threonyl-[protein] + ADP + H(+). Its function is as follows. Involved in the perception of symbiotic fungi and bacteria and required for the calcium spiking. Part of the perception/transduction system leading to nodulation or mycorrhizal infection. This is Nodulation receptor kinase (NORK) from Pisum sativum (Garden pea).